The primary structure comprises 194 residues: Calcium channel flower (194 aa).

3 helical membrane-spanning segments follow: residues 34–54 (LLGIVAAFFAILFGLWNVFSI), 59–79 (VSCLVAGIIQMVAGFVVMLLE), and 107–127 (GLYIAMAIPPIILCFGLASLF).

Belongs to the calcium channel flower family. In terms of assembly, homomultimer. Associates with the dally/ magu complex.

The protein resides in the cell membrane. It is found in the cytoplasmic vesicle. The protein localises to the secretory vesicle. It localises to the synaptic vesicle membrane. Its subcellular location is the presynaptic cell membrane. The protein resides in the endosome. Channel activity is inhibited by La(3+), which reduces Ca(2+) influx and thus inhibits it's function in promoting activity-dependent bulk endocytosis (ADBE) in response to high stimuli. Transmembrane protein which mediates synaptic endocytosis, fitness-based cell culling, neuronal culling, morphogen gradient scaling, and calcium transport. Regulates synaptic endocytosis and hence couples exo- with endocytosis. Controls two major modes of synaptic vesicle (SV) endocytosis in the synaptic boutons of neuromuscular junctions (NMJs); Ca(2+) channel-independent Clathrin-mediated endocytosis (CME) in response to mild stimulation, and Ca(2+) channel-dependent activity-dependent bulk endocytosis (ADBE) in response to strong stimulation. Functions in ADBE and subsequent SV reformation from bulk endosomes by initiating Ca(2+) channel-dependent phosphatidylinositol 4,5-bisphosphate (PtdIns(4,5)P2) compartmentalization in synaptic boutons. There it acts at the periactive zone to provide the low Ca(2+) levels required to initiate Calcineurin activation and upregulate PtdIns(4,5)P2. Conversely PtdIns(4,5)P2 enhances fwe Ca(2+) channel-activity, establishing a positive feedback loop that induces PtdIns(4,5)P2 microdomain at the periactive zone. These microdomains trigger bulk membrane invagination (i.e. ADBE) by triggering actin polymerization while also promoting localization of fwe to bulk endosomes, thereby removing the ADBE trigger to reduce endocytosis and prevent excess membrane uptake. PtdIns(4,5)P2 then promotes SV reformation from the bulk endosomes, to coordinate ADBE and subsequent SV reformation. Different combinations of the flower isoforms at the cell membrane are also required for the identification and elimination of suboptimal or supernumerary cells during development, regeneration, and adulthood. Required for the recognition and elimination of unfit cells in the developing wing during cell competition. In the developing pupal retina, mediates the elimination of unwanted postmitotic neurons, including supernumerary photoreceptor neurons that form at the periphery of the retina and are contained within incomplete ommatidia units. Also required for efficient elimination and replacement of old neurons by newly generated neurons during regeneration in the adult brain following mechanical injury. Downstream of the flower fitness fingerprints, cells identified as unwanted or unfit are eliminated via apoptosis through the expression of ahuizotl (azot). However, the cells marked for elimination by the flower isoforms only undergo apoptosis if additional thresholds are met; (1) their neighboring fit/healthy cells express different levels of the fwe isoforms, and (2) the levels of the protective signal SPARC expressed by the loser or unwanted cells are unable to inhibit caspase activation. These additional thresholds for flower-mediated apoptosis, allows useful cells to recover from transient and limited stress before they are unnecessarily eliminated. Functions with dally and magu in a mechanism of scaling, which utilises apoptosis to ensure that the dpp morphogen gradient, which mediates organ growth, remains proportional to the size of the growing wing. In this mechanism, fwe represses dally- and Magu-dependent activity in expanding the gradient, and dally/Magu inhibits fwe-dependent apoptosis to keep cell death rate low. When the levels of these different proteins are optimally regulated the gradient correctly scales with organ growth but when this fails, fwe-mediated apoptosis is activated to trim the developing tissue to match the correct size of the gradient. This is Calcium channel flower from Drosophila erecta (Fruit fly).